An 82-amino-acid polypeptide reads, in one-letter code: Envelope small membrane protein (82 aa).

Topologically, residues 1 to 16 are virion surface; the sequence is MLPFVQEQIGAFIVNF. The chain crosses the membrane as a helical span at residues 17–37; sequence FILSVVCAVTLVVCLAILTAI. The Intravirion segment spans residues 38–78; that stretch reads RLCVQCVSGCHTLVFLPAVHIYNTGRAAYVKFQESHPPYPP.

Belongs to the betacoronaviruses E protein family. In terms of assembly, homopentamer. Interacts with membrane protein M in the budding compartment of the host cell, which is located between endoplasmic reticulum and the Golgi complex. Interacts with Nucleoprotein.

The protein localises to the host Golgi apparatus membrane. In terms of biological role, plays a central role in virus morphogenesis and assembly. Acts as a viroporin and self-assembles in host membranes forming pentameric protein-lipid pores that allow ion transport. Also plays a role in the induction of apoptosis. This Pipistrellus abramus (Japanese pipistrelle) protein is Envelope small membrane protein.